The sequence spans 152 residues: Anti-CBASS protein Acb1 (152 aa).

Tyr-12 contributes to the 3',3'-cGAMP binding site. Tyr-12 contacts 3',3'-cUAMP. Catalysis depends on residues His-44, Thr-46, His-113, and Thr-115. Glu-141 and Trp-147 together coordinate 3',3'-cGAMP. 3',3'-cUAMP-binding residues include Glu-141 and Trp-147.

This sequence belongs to the anti-CBASS protein Acb1 family.

It catalyses the reaction 3',3'-cUAMP + H2O = U[3'-5']pAp[3'] + H(+). The enzyme catalyses 3',3',3'-c-tri-AMP + H2O = A[3'-5']pA[3'-5']pAp[3'] + H(+). The catalysed reaction is 3',3',3'-cAAG + H2O = G[3'-5']pA[3'-5']pAp[3'] + H(+). It carries out the reaction 3',3',3'-cAAG + H2O = A[3'-5']pG[3'-5']pAp[3'] + H(+). It catalyses the reaction 3',3'-cGAMP + H2O = G[3'-5']pAp[3'] + H(+). Its function is as follows. Counteracts the host CBASS antiviral defense system. Phosphodiesterase that enables metal-independent hydrolysis of the host cyclic di- and trinucleotide CBASS signals such as 3'3'-cGAMP, 3'3'cUA, and 3'3'3'-cAAA. Does not cleave cGG or cA4. Besides evasion of the CBASS system, might also enable evasion of the type III CRISPR systems that use cA3 signals. The polypeptide is Anti-CBASS protein Acb1 (Salmonella phage S16 (Salmonella phage vB_SenM-S16)).